An 81-amino-acid polypeptide reads, in one-letter code: Cell division protein ZapB (81 aa).

A coiled-coil region spans residues leucine 5–valine 81. Residues valine 43–glutamine 64 are disordered. Over residues glycine 49–glutamine 59 the composition is skewed to basic and acidic residues.

It belongs to the ZapB family. As to quaternary structure, homodimer. The ends of the coiled-coil dimer bind to each other, forming polymers. Interacts with FtsZ.

It is found in the cytoplasm. In terms of biological role, non-essential, abundant cell division factor that is required for proper Z-ring formation. It is recruited early to the divisome by direct interaction with FtsZ, stimulating Z-ring assembly and thereby promoting cell division earlier in the cell cycle. Its recruitment to the Z-ring requires functional FtsA or ZipA. This chain is Cell division protein ZapB, found in Enterobacter sp. (strain 638).